The chain runs to 628 residues: Kelch-like protein diablo (628 aa).

Positions 1–56 (MGDLPGSTGGGSGPAAAGNASGNASSAGNTGLGVAGTTGVDRPPSPARLSHTSEKH) are disordered. Over residues 14 to 29 (PAAAGNASGNASSAGN) the composition is skewed to low complexity. Residues 74 to 141 (CDVVLNVGGR…CYTAHIIVEE (68 aa)) enclose the BTB domain. The BACK domain occupies 176–278 (CLGIRAFADT…SPKFLVGTVG (103 aa)). Kelch repeat units lie at residues 325 to 371 (VLFA…VLND), 373 to 419 (LYAV…VLDG), 420 to 466 (FLYA…VLGG), 468 to 513 (LYAI…VFNN), 515 to 560 (IYAV…VVNG), and 561 to 607 (QLYA…VMRA).

The protein operates within protein modification; protein ubiquitination. In terms of biological role, probable substrate-specific adapter of an E3 ubiquitin-protein ligase complex which mediates the ubiquitination and subsequent proteasomal degradation of target proteins. May have a role in synapse differentiation and growth. The polypeptide is Kelch-like protein diablo (Drosophila pseudoobscura pseudoobscura (Fruit fly)).